The following is a 446-amino-acid chain: Chromogranin-A (446 aa).

The N-terminal stretch at 1 to 16 (SAAALALLLCAGQVIA) is a signal peptide. Cys-33 and Cys-54 are disulfide-bonded. The segment at 85–426 (AKERSHQQKK…RPEDQELESL (342 aa)) is disordered. The residue at position 97 (Ser-97) is a Phosphoserine. Residues 105–138 (VLEKQNDQAELKEGTEEASSKEAAEKRGDSKEVE) show a composition bias toward basic and acidic residues. Positions 160–171 (EAEDQTPGEEEA) are enriched in acidic residues. Ser-209 is subject to Phosphoserine. Residues 226-243 (AGEKAVPEEEGPRSEAFD) show a composition bias toward basic and acidic residues. Ser-286 bears the Phosphoserine mark. Residue Gly-304 is modified to Glycine amide. Ser-319 carries the phosphoserine modification. Over residues 319-346 (SEEWENAKRWSKMDRLAKELTAEKRLQG) the composition is skewed to basic and acidic residues. Acidic residues predominate over residues 347-357 (EEEEEEEEEDP). Position 360 is a phosphoserine (Ser-360). Methionine sulfoxide is present on Met-361. Residues Ser-387, Ser-391, Ser-413, and Ser-427 each carry the phosphoserine modification. Basic and acidic residues predominate over residues 403–420 (YLEEKKEEEGSANRRPED). Ser-413 carries O-linked (Xyl...) (chondroitin sulfate) serine glycosylation.

Belongs to the chromogranin/secretogranin protein family. As to quaternary structure, self-interacts; self-assembly is promoted in vitro by chondroitin sulfate attachment which occurs at mildly acidic pH conditions. Interacts with SCG3. Interacts with ITPR1 in the secretory granules. In terms of processing, O-glycosylated; contains chondroitin sulfate (CS). CS attachment is pH-dependent, being observed at mildly acidic conditions of pH 5 but not at neutral pH, and promotes self-assembly in vitro. Post-translationally, parathyroid CHGA is sulfated on tyrosine residues, whereas adrenal CHGA seems to be mainly sulfated on oligosaccharide residues.

The protein localises to the secreted. It localises to the cytoplasmic vesicle. The protein resides in the secretory vesicle. Its subcellular location is the neuronal dense core vesicle. Its function is as follows. Strongly inhibits glucose induced insulin release from the pancreas. In terms of biological role, inhibits low calcium-stimulated parathyroid cell secretion. Functionally, inhibits catecholamine release from chromaffin cells and noradrenergic neurons by acting as a non-competitive nicotinic cholinergic antagonist. Can induce mast cell migration, degranulation and production of cytokines and chemokines. Regulates granule biogenesis in endocrine cells by up-regulating the transcription of protease nexin 1 (SERPINE2) via a cAMP-PKA-SP1 pathway. This leads to inhibition of granule protein degradation in the Golgi complex which in turn promotes granule formation. This chain is Chromogranin-A (CHGA), found in Sus scrofa (Pig).